The primary structure comprises 372 residues: Forkhead box protein F1-B (372 aa).

The disordered stretch occupies residues 1-51; sequence MTAEIQQPPSQPPAQSSPMSAATDKHGGQPSAMESASCATKTKKTNAGIRR. A compositionally biased stretch (low complexity) spans 13–22; the sequence is PAQSSPMSAA. Residues 54 to 148 constitute a DNA-binding region (fork-head); the sequence is KPPYSYIALI…EEGSFRRRPR (95 aa).

As to expression, at the late gastrula stage, expressed in the presumptive ventrolateral mesoderm. During neurulation and tailbud stages, expressed in the lateral plate mesoderm and in the neural crest-derived structures of the head and branchial arches. During tailbud stages, expressed in the pronephros and pronephros ducts and in cells that migrate from the dorsolateral plate to the ventral region of the embryo (with the notable exception of the heart). These cells may represent hematopoietic or endothelial progenitor cells.

The protein localises to the nucleus. Probable transcription factor. Required for smooth muscle (visceral mesoderm) differentiation during gut development. Also required for normal proliferation of the lateral plate mesoderm. Acts as a downstream mediator of bmp4-signaling. The polypeptide is Forkhead box protein F1-B (foxf1-b) (Xenopus laevis (African clawed frog)).